The primary structure comprises 402 residues: S-adenosylmethionine synthase (402 aa).

137–142 (GQGSAD) provides a ligand contact to ATP.

The protein belongs to the AdoMet synthase 2 family. It depends on Mg(2+) as a cofactor.

It catalyses the reaction L-methionine + ATP + H2O = S-adenosyl-L-methionine + phosphate + diphosphate. It functions in the pathway amino-acid biosynthesis; S-adenosyl-L-methionine biosynthesis; S-adenosyl-L-methionine from L-methionine: step 1/1. Its function is as follows. Catalyzes the formation of S-adenosylmethionine from methionine and ATP. The chain is S-adenosylmethionine synthase from Pyrobaculum aerophilum (strain ATCC 51768 / DSM 7523 / JCM 9630 / CIP 104966 / NBRC 100827 / IM2).